The sequence spans 1029 residues: Toll-like receptor 9 (1029 aa).

An N-terminal signal peptide occupies residues 1-24; sequence MGPYCAPHPLSLLVQAAALAAALA. Topologically, residues 25 to 815 are extracellular; sequence QGTLPAFLPC…LCLDETLSLD (791 aa). Cys34 and Cys44 are joined by a disulfide. 46–50 lines the DNA pocket; sequence WLFLK. LRR repeat units follow at residues 61–84, 86–109, 121–146, 149–165, 166–189, 197–220, 222–241, 242–267, 282–305, 307–331, 332–355, 362–385, 389–412, 414–439, 469–492, 494–517, 518–541, 543–570, 572–596, 598–620, 625–648, 650–673, 674–697, 699–721, 722–745, and 747–770; these read RANV…DFVH, SNLR…HFPC, VPTL…SLVS, LSRT…FTGL, HALR…AVEV, LGNL…LPPS, DTLL…DLAN, LTAL…CREC, LSRL…WFRG, GRLQ…IFRN, LTQL…HLQL, LVSL…TLRP, LPKL…IFGA, PSLL…LGEV, CNLN…MFTR, SRLQ…QFVP, LTRL…SFTE, PQLE…SFVA, LPSL…LSSA, LRAL…LYLC, LRNL…HLDN, PKSL…SLTV, LPQL…SLPP, TRLQ…FFVL, ANRL…WFGR, and TETL…AFVD. N-linked (GlcNAc...) asparagine glycosylation occurs at Asn63. DNA contacts are provided by residues 71–76 and 94–108; these read SNRIHH and KWNC…MHFP. Residues Cys97 and Cys109 are joined by a disulfide bond. Asn128 is a glycosylation site (N-linked (GlcNAc...) asparagine). Residues Tyr131, Arg151, and 178–180 contribute to the DNA site; that span reads YYK. Cys177 and Cys183 are oxidised to a cystine. The N-linked (GlcNAc...) asparagine glycan is linked to Asn199. Tyr207 contributes to the DNA binding site. Asn209 and Asn241 each carry an N-linked (GlcNAc...) asparagine glycan. 2 disulfides stabilise this stretch: Cys254/Cys267 and Cys257/Cys264. Cys257 is lipidated: S-palmitoyl cysteine. Position 261 (Arg261) interacts with DNA. Residue Cys264 is the site of S-palmitoyl cysteine attachment. N-linked (GlcNAc...) asparagine glycosylation is found at Asn331, Asn339, and Asn380. Cys469 and Cys498 are oxidised to a cystine. 2 N-linked (GlcNAc...) asparagine glycosylation sites follow: Asn472 and Asn511. Residue Asn565 is glycosylated (N-linked (GlcNAc...) asparagine). N-linked (GlcNAc...) asparagine glycosylation is found at Asn667 and Asn692. An N-linked (GlcNAc...) asparagine glycan is attached at Asn729. Intrachain disulfides connect Cys762-Cys788 and Cys764-Cys807. The chain crosses the membrane as a helical span at residues 816 to 836; that stretch reads CFGFSLLMVALGLAVPMLHHL. The Cytoplasmic portion of the chain corresponds to 837 to 1029; sequence CGWDLWYCFH…NFCRGPTTAE (193 aa). Residues 864–1009 enclose the TIR domain; the sequence is LLYDAFVVFD…SFWANLGMAL (146 aa).

This sequence belongs to the Toll-like receptor family. In terms of assembly, monomer and homodimer. Exists as a monomer in the absence of unmethylated cytidine-phosphate-guanosine (CpG) ligand. Proteolytic processing of an insertion loop (Z-loop) is required for homodimerization upon binding to the unmethylated CpG ligand leading to its activation. Interacts with MYD88 via their respective TIR domains. Interacts with BTK. Interacts (via transmembrane domain) with UNC93B1. Interacts with CD300LH; the interaction may promote full activation of TLR9-triggered innate responses. Interacts with CNPY3 and HSP90B1; this interaction is required for proper folding in the endoplasmic reticulum. Interacts with SMPDL3B. Interacts with CD82; this interaction is essential for TLR9-dependent myddosome formation in response to CpG stimulation. In terms of processing, activated by proteolytic cleavage of the flexible loop between repeats LRR14 and LRR15 within the ectodomain. Cleavage requires UNC93B1. Proteolytically processed by first removing the majority of the ectodomain by either asparagine endopeptidase (AEP) or a cathepsin followed by a trimming event that is solely cathepsin mediated and required for optimal receptor signaling. Post-translationally, palmitoylated by ZDHHC3 in the Golgi regulates TLR9 trafficking from the Golgi to endosomes. Depalmitoylation by PPT1 controls the release of TLR9 from UNC93B1 in endosomes.

Its subcellular location is the endoplasmic reticulum membrane. It is found in the endosome. The protein resides in the lysosome. It localises to the cytoplasmic vesicle. The protein localises to the phagosome. Key component of innate and adaptive immunity. TLRs (Toll-like receptors) control host immune response against pathogens through recognition of molecular patterns specific to microorganisms. TLR9 is a nucleotide-sensing TLR which is activated by unmethylated cytidine-phosphate-guanosine (CpG) dinucleotides. Acts via MYD88 and TRAF6, leading to NF-kappa-B activation, cytokine secretion and the inflammatory response. Upon CpG stimulation, induces B-cell proliferation, activation, survival and antibody production. The polypeptide is Toll-like receptor 9 (TLR9) (Ovis aries (Sheep)).